Consider the following 121-residue polypeptide: Phospholipase A2 homolog EPL_00195 (121 aa).

Cystine bridges form between C25–C114, C27–C43, C42–C94, C48–C121, C49–C87, C56–C80, and C74–C85. The interval 104–116 (KKYRIYPNFLCRG) is important for membrane-damaging activities in eukaryotes and bacteria; heparin-binding.

Belongs to the phospholipase A2 family. Group II subfamily. S49 sub-subfamily. In terms of assembly, monomer. As to expression, expressed by the venom gland.

The protein localises to the secreted. Functionally, snake venom phospholipase A2 homolog that lacks enzymatic activity. Shows high myotoxin activities and displays edema-inducing activities. Has cytotoxic activities against HUVEC cells (LC(50)=2.5 uL) and human lung adenocarcinoma A549 cells (LC(50)=2.9 uL). In Echis pyramidum leakeyi (Leakey's carpet viper), this protein is Phospholipase A2 homolog EPL_00195.